Reading from the N-terminus, the 98-residue chain is uncharacterized protein (98 aa).

This is an uncharacterized protein from Rickettsia prowazekii (strain Madrid E).